A 298-amino-acid polypeptide reads, in one-letter code: Phosphatidylserine decarboxylase proenzyme (298 aa).

Catalysis depends on charge relay system; for autoendoproteolytic cleavage activity residues D113, H169, and S256. S256 acts as the Schiff-base intermediate with substrate; via pyruvic acid; for decarboxylase activity in catalysis. S256 bears the Pyruvic acid (Ser); by autocatalysis mark.

Belongs to the phosphatidylserine decarboxylase family. PSD-B subfamily. Prokaryotic type II sub-subfamily. Heterodimer of a large membrane-associated beta subunit and a small pyruvoyl-containing alpha subunit. Requires pyruvate as cofactor. In terms of processing, is synthesized initially as an inactive proenzyme. Formation of the active enzyme involves a self-maturation process in which the active site pyruvoyl group is generated from an internal serine residue via an autocatalytic post-translational modification. Two non-identical subunits are generated from the proenzyme in this reaction, and the pyruvate is formed at the N-terminus of the alpha chain, which is derived from the carboxyl end of the proenzyme. The autoendoproteolytic cleavage occurs by a canonical serine protease mechanism, in which the side chain hydroxyl group of the serine supplies its oxygen atom to form the C-terminus of the beta chain, while the remainder of the serine residue undergoes an oxidative deamination to produce ammonia and the pyruvoyl prosthetic group on the alpha chain. During this reaction, the Ser that is part of the protease active site of the proenzyme becomes the pyruvoyl prosthetic group, which constitutes an essential element of the active site of the mature decarboxylase.

It localises to the cell membrane. It catalyses the reaction a 1,2-diacyl-sn-glycero-3-phospho-L-serine + H(+) = a 1,2-diacyl-sn-glycero-3-phosphoethanolamine + CO2. The protein operates within phospholipid metabolism; phosphatidylethanolamine biosynthesis; phosphatidylethanolamine from CDP-diacylglycerol: step 2/2. Its function is as follows. Catalyzes the formation of phosphatidylethanolamine (PtdEtn) from phosphatidylserine (PtdSer). This chain is Phosphatidylserine decarboxylase proenzyme, found in Desulfitobacterium hafniense (strain DSM 10664 / DCB-2).